We begin with the raw amino-acid sequence, 158 residues long: Acetolactate synthase small subunit (158 aa).

The ACT domain maps to 4–79 (MIIAKLHNVT…DVIEVADITD (76 aa)).

It belongs to the acetolactate synthase small subunit family. In terms of assembly, dimer of large and small chains.

The catalysed reaction is 2 pyruvate + H(+) = (2S)-2-acetolactate + CO2. The protein operates within amino-acid biosynthesis; L-isoleucine biosynthesis; L-isoleucine from 2-oxobutanoate: step 1/4. Its pathway is amino-acid biosynthesis; L-valine biosynthesis; L-valine from pyruvate: step 1/4. The sequence is that of Acetolactate synthase small subunit (ilvH) from Lactococcus lactis subsp. lactis (strain IL1403) (Streptococcus lactis).